The sequence spans 346 residues: Holliday junction branch migration complex subunit RuvB (346 aa).

Residues 1–182 (MSEPARLISP…FGIPVRLTFY (182 aa)) are large ATPase domain (RuvB-L). ATP-binding positions include leucine 21, arginine 22, glycine 63, lysine 66, threonine 67, threonine 68, 129-131 (EDY), arginine 172, tyrosine 182, and arginine 219. Threonine 67 serves as a coordination point for Mg(2+). The segment at 183–253 (TVEELELIVR…IADEALTRLL (71 aa)) is small ATPAse domain (RuvB-S). The head domain (RuvB-H) stretch occupies residues 256 to 346 (NVGFDQLDKR…AQFRLFQEDD (91 aa)). Positions 292, 311, and 316 each coordinate DNA.

The protein belongs to the RuvB family. Homohexamer. Forms an RuvA(8)-RuvB(12)-Holliday junction (HJ) complex. HJ DNA is sandwiched between 2 RuvA tetramers; dsDNA enters through RuvA and exits via RuvB. An RuvB hexamer assembles on each DNA strand where it exits the tetramer. Each RuvB hexamer is contacted by two RuvA subunits (via domain III) on 2 adjacent RuvB subunits; this complex drives branch migration. In the full resolvosome a probable DNA-RuvA(4)-RuvB(12)-RuvC(2) complex forms which resolves the HJ.

It localises to the cytoplasm. The catalysed reaction is ATP + H2O = ADP + phosphate + H(+). Its function is as follows. The RuvA-RuvB-RuvC complex processes Holliday junction (HJ) DNA during genetic recombination and DNA repair, while the RuvA-RuvB complex plays an important role in the rescue of blocked DNA replication forks via replication fork reversal (RFR). RuvA specifically binds to HJ cruciform DNA, conferring on it an open structure. The RuvB hexamer acts as an ATP-dependent pump, pulling dsDNA into and through the RuvAB complex. RuvB forms 2 homohexamers on either side of HJ DNA bound by 1 or 2 RuvA tetramers; 4 subunits per hexamer contact DNA at a time. Coordinated motions by a converter formed by DNA-disengaged RuvB subunits stimulates ATP hydrolysis and nucleotide exchange. Immobilization of the converter enables RuvB to convert the ATP-contained energy into a lever motion, pulling 2 nucleotides of DNA out of the RuvA tetramer per ATP hydrolyzed, thus driving DNA branch migration. The RuvB motors rotate together with the DNA substrate, which together with the progressing nucleotide cycle form the mechanistic basis for DNA recombination by continuous HJ branch migration. Branch migration allows RuvC to scan DNA until it finds its consensus sequence, where it cleaves and resolves cruciform DNA. The polypeptide is Holliday junction branch migration complex subunit RuvB (Rhizobium etli (strain ATCC 51251 / DSM 11541 / JCM 21823 / NBRC 15573 / CFN 42)).